An 87-amino-acid polypeptide reads, in one-letter code: Small ribosomal subunit protein uS15 (87 aa).

It belongs to the universal ribosomal protein uS15 family. As to quaternary structure, part of the 30S ribosomal subunit. Forms a bridge to the 50S subunit in the 70S ribosome, contacting the 23S rRNA.

Functionally, one of the primary rRNA binding proteins, it binds directly to 16S rRNA where it helps nucleate assembly of the platform of the 30S subunit by binding and bridging several RNA helices of the 16S rRNA. In terms of biological role, forms an intersubunit bridge (bridge B4) with the 23S rRNA of the 50S subunit in the ribosome. This chain is Small ribosomal subunit protein uS15, found in Clostridium kluyveri (strain NBRC 12016).